The sequence spans 1316 residues: Myosin-5 (1316 aa).

Basic residues predominate over residues M1–T12. The segment at M1–G29 is disordered. Positions V43 to D731 constitute a Myosin motor domain. G136–T143 contacts ATP. The residue at position 366 (S366) is a Phosphoserine. The interval S414 to S497 is actin-binding. IQ domains are found at residues H735 to A755 and A756 to G781. The region spanning R789–A981 is the TH1 domain. 2 disordered regions span residues N964–V1154 and D1209–W1316. 2 stretches are compositionally biased toward polar residues: residues G971–K984 and P1018–G1030. Over residues Q1042 to S1065 the composition is skewed to low complexity. Polar residues predominate over residues S1097–A1106. Over residues A1117–S1129 the composition is skewed to low complexity. The segment covering P1137–L1153 has biased composition (pro residues). The 61-residue stretch at P1156–P1216 folds into the SH3 domain. The span at A1223 to A1232 shows a compositional bias: pro residues. The span at A1233 to S1268 shows a compositional bias: low complexity. Residues S1305–W1316 show a composition bias toward acidic residues.

Belongs to the TRAFAC class myosin-kinesin ATPase superfamily. Myosin family. Post-translationally, phosphorylation of the TEDS site (Ser-366) is required for the polarization of the actin cytoskeleton. Phosphorylation probably activates the myosin-I ATPase activity.

The protein resides in the cytoplasm. It is found in the cytoskeleton. It localises to the actin patch. Its function is as follows. Type-I myosin implicated in the organization of the actin cytoskeleton. Required for proper actin cytoskeleton polarization and for the internalization step in endocytosis. At the cell cortex, assembles in patch-like structures together with proteins from the actin-polymerizing machinery and promotes actin assembly. Functions as actin nucleation-promoting factor (NPF) for the Arp2/3 complex. Plays a role in chitin deposition in the cell wall, in determination of the budding pattern, and is required for hyphae formation. The sequence is that of Myosin-5 (MYO5) from Candida albicans (strain SC5314 / ATCC MYA-2876) (Yeast).